A 211-amino-acid chain; its full sequence is Outer-membrane lipoprotein carrier protein (211 aa).

A signal peptide spans 1 to 24 (MNTIKILIGLLGIFLFSLSGIVSA).

It belongs to the LolA family. As to quaternary structure, monomer.

The protein localises to the periplasm. Functionally, participates in the translocation of lipoproteins from the inner membrane to the outer membrane. Only forms a complex with a lipoprotein if the residue after the N-terminal Cys is not an aspartate (The Asp acts as a targeting signal to indicate that the lipoprotein should stay in the inner membrane). This is Outer-membrane lipoprotein carrier protein from Coxiella burnetii (strain RSA 331 / Henzerling II).